The sequence spans 471 residues: Histone deacetylase 6 (471 aa).

Met-1 carries the N-acetylmethionine modification. Residues Arg-20–Gly-333 are histone deacetylase. The Proton donor/acceptor role is filled by His-153. Residues Asp-188, His-190, and Asp-276 each contribute to the Zn(2+) site. Residues Pro-389–Ser-471 are disordered. Residues Gly-453–Glu-463 are compositionally biased toward acidic residues.

The protein belongs to the histone deacetylase family. HD type 1 subfamily. Interacts with Coi1, which functions in an SCF complex that recruits regulators for ubiquitination. Interacts with AHL22. Interacts with AS1. Part of the AS1 repressor complex composed of AS1, LBD6/AS2 and HDA6. Binds to EBS and SHL. Interacts with MBD6. Interacts with HDA5. Interacts with FLD. The cofactor is Zn(2+). As to expression, not detected in leaves, stems, flowers and young siliques.

The protein localises to the nucleus. It is found in the nucleolus. The enzyme catalyses N(6)-acetyl-L-lysyl-[histone] + H2O = L-lysyl-[histone] + acetate. With respect to regulation, inhibited by trichostatin A. Responsible for the deacetylation of lysine residues on the N-terminal part of the core histones (H2A, H2B, H3 and H4). Might remove acetyl residues only from specific targets, such as rDNA repeats or complex transgenes. Histone deacetylation gives a tag for epigenetic repression and plays an important role in transcriptional regulation, cell cycle progression and developmental events. Histone deacetylases act via the formation of large multiprotein complexes. Required for rRNA gene silencing in nucleolar dominance. Plays a role in transgene silencing, but this effect seems to bee independent of the histone deacetylase activity. Part of the AS1 repressor complex to regulate the KNOX expression in leaf development. Binds to KNAT1, KNAT2, and KNATM chromatin. Involved in the regulation of flowering time. Forms a histone deacetylase complex with HDA5, FLD and MSI4/FVE that represses FLC gene expression to control flowering time. The sequence is that of Histone deacetylase 6 from Arabidopsis thaliana (Mouse-ear cress).